A 121-amino-acid polypeptide reads, in one-letter code: Putative iron-sulfur cluster insertion protein ErpA (121 aa).

Iron-sulfur cluster-binding residues include Cys49, Cys113, and Cys115.

The protein belongs to the HesB/IscA family. In terms of assembly, homodimer. Iron-sulfur cluster is required as a cofactor.

Its function is as follows. Required for insertion of 4Fe-4S clusters. In Nitrosomonas eutropha (strain DSM 101675 / C91 / Nm57), this protein is Putative iron-sulfur cluster insertion protein ErpA.